The chain runs to 302 residues: Sulfate adenylyltransferase subunit 2 (302 aa).

This sequence belongs to the PAPS reductase family. CysD subfamily. In terms of assembly, heterodimer composed of CysD, the smaller subunit, and CysN.

The enzyme catalyses sulfate + ATP + H(+) = adenosine 5'-phosphosulfate + diphosphate. It participates in sulfur metabolism; hydrogen sulfide biosynthesis; sulfite from sulfate: step 1/3. Functionally, with CysN forms the ATP sulfurylase (ATPS) that catalyzes the adenylation of sulfate producing adenosine 5'-phosphosulfate (APS) and diphosphate, the first enzymatic step in sulfur assimilation pathway. APS synthesis involves the formation of a high-energy phosphoric-sulfuric acid anhydride bond driven by GTP hydrolysis by CysN coupled to ATP hydrolysis by CysD. The chain is Sulfate adenylyltransferase subunit 2 from Buchnera aphidicola subsp. Acyrthosiphon pisum (strain 5A).